Consider the following 419-residue polypeptide: L-rhamnose isomerase (419 aa).

Residues H262, D294, and D296 each contribute to the Mn(2+) site.

It belongs to the rhamnose isomerase family. Homotetramer. Mn(2+) serves as cofactor.

The protein localises to the cytoplasm. The catalysed reaction is L-rhamnopyranose = L-rhamnulose. Its pathway is carbohydrate degradation; L-rhamnose degradation; glycerone phosphate from L-rhamnose: step 1/3. Functionally, catalyzes the interconversion of L-rhamnose and L-rhamnulose. The sequence is that of L-rhamnose isomerase from Shigella boydii serotype 4 (strain Sb227).